We begin with the raw amino-acid sequence, 347 residues long: NADH-ubiquinone oxidoreductase chain 2 (347 aa).

Transmembrane regions (helical) follow at residues 3–23 (PLIF…VMTT), 25–45 (HWVM…PILM), 59–79 (YFLT…INLV), 96–116 (IIMT…FWVP), 122–142 (VQLS…MSIL), 149–169 (INLD…GWGG), 178–198 (IMAY…VYNP), 200–220 (MALL…MMLM), 240–260 (LTTA…LSGF), 276–296 (MIMP…YMRL), and 326–346 (LSPL…LALL).

It belongs to the complex I subunit 2 family. In terms of assembly, core subunit of respiratory chain NADH dehydrogenase (Complex I) which is composed of 45 different subunits. Interacts with TMEM242.

The protein localises to the mitochondrion inner membrane. It catalyses the reaction a ubiquinone + NADH + 5 H(+)(in) = a ubiquinol + NAD(+) + 4 H(+)(out). Functionally, core subunit of the mitochondrial membrane respiratory chain NADH dehydrogenase (Complex I) which catalyzes electron transfer from NADH through the respiratory chain, using ubiquinone as an electron acceptor. Essential for the catalytic activity and assembly of complex I. The protein is NADH-ubiquinone oxidoreductase chain 2 of Nyctimene albiventer (Common tube-nosed fruit bat).